The following is a 102-amino-acid chain: Small ribosomal subunit protein eS24 (102 aa).

Belongs to the eukaryotic ribosomal protein eS24 family.

The sequence is that of Small ribosomal subunit protein eS24 (rps24e) from Haloarcula marismortui (strain ATCC 43049 / DSM 3752 / JCM 8966 / VKM B-1809) (Halobacterium marismortui).